A 217-amino-acid polypeptide reads, in one-letter code: Redox-sensing transcriptional repressor Rex (217 aa).

Residues 18–57 (LYYRFLKNLHASGKQRVSSAELSDAVKVDSATIRRDFSYF) constitute a DNA-binding region (H-T-H motif). NAD(+) is bound at residue 92-97 (GVGNLG).

This sequence belongs to the transcriptional regulatory Rex family. In terms of assembly, homodimer.

The protein localises to the cytoplasm. Its function is as follows. Modulates transcription in response to changes in cellular NADH/NAD(+) redox state. The sequence is that of Redox-sensing transcriptional repressor Rex from Bacillus pumilus (strain SAFR-032).